Reading from the N-terminus, the 238-residue chain is tRNA (guanine-N(1)-)-methyltransferase (238 aa).

S-adenosyl-L-methionine is bound by residues G110 and 129–134 (LGDFIL).

It belongs to the RNA methyltransferase TrmD family. Homodimer.

It localises to the cytoplasm. The catalysed reaction is guanosine(37) in tRNA + S-adenosyl-L-methionine = N(1)-methylguanosine(37) in tRNA + S-adenosyl-L-homocysteine + H(+). Specifically methylates guanosine-37 in various tRNAs. The chain is tRNA (guanine-N(1)-)-methyltransferase from Clostridium botulinum (strain Eklund 17B / Type B).